The following is a 350-amino-acid chain: Phenylalanine--tRNA ligase alpha subunit (350 aa).

Glu262 provides a ligand contact to Mg(2+).

Belongs to the class-II aminoacyl-tRNA synthetase family. Phe-tRNA synthetase alpha subunit type 1 subfamily. In terms of assembly, tetramer of two alpha and two beta subunits. It depends on Mg(2+) as a cofactor.

The protein resides in the cytoplasm. It carries out the reaction tRNA(Phe) + L-phenylalanine + ATP = L-phenylalanyl-tRNA(Phe) + AMP + diphosphate + H(+). This Thermus thermophilus (strain ATCC BAA-163 / DSM 7039 / HB27) protein is Phenylalanine--tRNA ligase alpha subunit.